Consider the following 145-residue polypeptide: Secreted RxLR effector protein PSE1 (145 aa).

Residues 1–21 (MRLSSFIVVGAAVVNLLTSGS) form the signal peptide. The RxLR-dEER motif lies at 53 to 73 (RLLRYHSNNNRGGDEDIAEER).

Belongs to the RxLR effector family.

Its subcellular location is the secreted. The protein resides in the host cell. In terms of biological role, secreted effector that impairs both plant effector-triggered immunity and pathogen-associated molecular patterns (PAMP)-triggered immunity (PTI). Suppresses plant cell death as a part of the plant defense responses. Facilitates plant infection by altering the auxin content at the roots penetration points of the of the pathogen. This chain is Secreted RxLR effector protein PSE1, found in Phytophthora nicotianae (Potato buckeye rot agent).